Reading from the N-terminus, the 350-residue chain is MAAAAMATVAVPRVKLGSQGMEVSAQGLGCMGMCPAFEPPKPEADMVALIRHAIAAGVTFFDTSDLYGPHTNEVLLGKALQGGGVRDRVELATKFGKFFAGGKPGIRGDPAYVRAACEGSLRRLGVDCIDLYYQHRVDKKVPIEVTIGELKKLVEEGKIRYIGLCEASASTIRRAHAVHPITAVQLEWSLWSRDVEEDIVPTCRELGIGIVAYSPLGKGFFSSGAKLVDSLPDHDFRKLIPRFQPGNIEKNAEIFERVNEMAARKGCTPSQLALAWIHHQGRDVCPIPGTTKIENFNQNVAALSVKLTPAEMAELESYASNVHGDRYPLMMANTTWQDSETPPLSSWKSE.

Tyr-67 functions as the Proton donor in the catalytic mechanism. A substrate-binding site is contributed by His-135. An NADP(+)-binding site is contributed by 214-224; the sequence is SPLGKGFFSSG.

This sequence belongs to the aldo/keto reductase family.

The sequence is that of Probable aldo-keto reductase 1 from Oryza sativa subsp. indica (Rice).